The primary structure comprises 339 residues: DNA-directed RNA polymerase RPB7 homolog (339 aa).

It belongs to the Asfivirus DNA-directed RNA polymerase RPB7 homolog family. Part of the viral DNA-directed RNA polymerase that consists of 8 polII-like subunits (RPB1, RPB2, RPB3, RPB5, RPB6, RPB7, RPB9, RPB10), a capping enzyme and a termination factor.

The protein localises to the host cytoplasm. Its subcellular location is the virion. Its function is as follows. Component of the DNA-directed RNA polymerase (RNAP) that catalyzes the transcription in the cytoplasm of viral DNA into RNA using the four ribonucleoside triphosphates as substrates. The sequence is that of DNA-directed RNA polymerase RPB7 homolog from Ornithodoros (relapsing fever ticks).